Here is a 442-residue protein sequence, read N- to C-terminus: UDP-N-acetylmuramoylalanine--D-glutamate ligase (442 aa).

Gly-113–Thr-119 provides a ligand contact to ATP.

This sequence belongs to the MurCDEF family.

Its subcellular location is the cytoplasm. It carries out the reaction UDP-N-acetyl-alpha-D-muramoyl-L-alanine + D-glutamate + ATP = UDP-N-acetyl-alpha-D-muramoyl-L-alanyl-D-glutamate + ADP + phosphate + H(+). The protein operates within cell wall biogenesis; peptidoglycan biosynthesis. Its function is as follows. Cell wall formation. Catalyzes the addition of glutamate to the nucleotide precursor UDP-N-acetylmuramoyl-L-alanine (UMA). This chain is UDP-N-acetylmuramoylalanine--D-glutamate ligase, found in Coxiella burnetii (strain Dugway 5J108-111).